Reading from the N-terminus, the 682-residue chain is Putative L-type lectin-domain containing receptor kinase I.1 (682 aa).

Positions 1–19 (MAQRLHLLLLLFLICFVNL) are cleaved as a signal peptide. Over 20–292 (ISFSSQQDLS…RPKKPEKTSP (273 aa)) the chain is Extracellular. The legume-lectin like stretch occupies residues 27–264 (DLSFIYNGFN…YQYILGWSFS (238 aa)). N-linked (GlcNAc...) asparagine glycosylation is found at Asn60, Asn130, Asn187, Asn210, and Asn231. Residues 293–313 (LLIVLLIILAIIVMVVVGGFY) form a helical membrane-spanning segment. The Cytoplasmic segment spans residues 314–682 (LYRRKKYAEV…SHTIIYGDGR (369 aa)). One can recognise a Protein kinase domain in the interval 348–622 (FNKDGRLGRG…VQYINRHQRL (275 aa)). Residues 354 to 362 (LGRGGFGEV) and Lys376 each bind ATP. The active-site Proton acceptor is the Asp472.

In the C-terminal section; belongs to the protein kinase superfamily. Ser/Thr protein kinase family. The protein in the N-terminal section; belongs to the leguminous lectin family.

It is found in the cell membrane. It carries out the reaction L-seryl-[protein] + ATP = O-phospho-L-seryl-[protein] + ADP + H(+). The enzyme catalyses L-threonyl-[protein] + ATP = O-phospho-L-threonyl-[protein] + ADP + H(+). Its function is as follows. Involved in resistance response to the pathogenic fungus Alternaria brassicicola. The protein is Putative L-type lectin-domain containing receptor kinase I.1 of Arabidopsis thaliana (Mouse-ear cress).